A 210-amino-acid polypeptide reads, in one-letter code: Inner membrane-spanning protein YciB (210 aa).

6 helical membrane-spanning segments follow: residues Leu19–Leu39, Ile53–Ile73, Leu78–Trp98, Leu115–Phe135, Lys148–Trp168, and Phe175–Gln195.

The protein belongs to the YciB family.

It is found in the cell inner membrane. In terms of biological role, plays a role in cell envelope biogenesis, maintenance of cell envelope integrity and membrane homeostasis. This chain is Inner membrane-spanning protein YciB, found in Sinorhizobium fredii (strain NBRC 101917 / NGR234).